Here is a 93-residue protein sequence, read N- to C-terminus: Small ribosomal subunit protein uS19c (93 aa).

Residues 73 to 93 form a disordered region; the sequence is EFSPTRTFRGHTKSDKKSRRP. Residues 80 to 93 show a composition bias toward basic residues; it reads FRGHTKSDKKSRRP.

This sequence belongs to the universal ribosomal protein uS19 family.

The protein localises to the plastid. Its subcellular location is the chloroplast. In terms of biological role, protein S19 forms a complex with S13 that binds strongly to the 16S ribosomal RNA. This chain is Small ribosomal subunit protein uS19c (rps19), found in Mesostigma viride (Green alga).